A 178-amino-acid chain; its full sequence is MTDYKNKLINLLKENNVIKFGKFTLSSGRESDYYVDMKKAITEPEILDCVAHLITNEIEHDNIDKIAGPALGAVPIATATSLISKKPMLMIRKAKKTYGTSKQIEGELLENDDVVIVEDVTTTGGSLLKAINVIEDNGGNIVKAFVIVDREEGAQETFKENNIEFTPLLTISEFKKYL.

Residues arginine 92, lysine 93, lysine 96, and 118 to 126 (EDVTTTGGS) contribute to the 5-phospho-alpha-D-ribose 1-diphosphate site. Threonine 122 and arginine 150 together coordinate orotate.

The protein belongs to the purine/pyrimidine phosphoribosyltransferase family. PyrE subfamily. In terms of assembly, homodimer. Mg(2+) is required as a cofactor.

It carries out the reaction orotidine 5'-phosphate + diphosphate = orotate + 5-phospho-alpha-D-ribose 1-diphosphate. It participates in pyrimidine metabolism; UMP biosynthesis via de novo pathway; UMP from orotate: step 1/2. Its function is as follows. Catalyzes the transfer of a ribosyl phosphate group from 5-phosphoribose 1-diphosphate to orotate, leading to the formation of orotidine monophosphate (OMP). The protein is Orotate phosphoribosyltransferase of Methanosphaera stadtmanae (strain ATCC 43021 / DSM 3091 / JCM 11832 / MCB-3).